Consider the following 20-residue polypeptide: Unknown protein NF015 from 2D-PAGE (20 aa).

Positions 1–20 (TPQIQKPAPQFSKTALLPDE) are disordered.

The polypeptide is Unknown protein NF015 from 2D-PAGE (Naegleria fowleri (Brain eating amoeba)).